The chain runs to 294 residues: Protein ATC1/LIC4 (294 aa).

A disordered region spans residues 114–178 (YTGKASLDKS…SSSLASSDAN (65 aa)). Basic and acidic residues predominate over residues 130–145 (HKPDKEQKNYKIDKPT). Residues 153-175 (LKTTNEPMLSPASLSPSSSLASS) are compositionally biased toward low complexity.

It is found in the cytoplasm. The protein resides in the nucleus. In terms of biological role, involved in cation homeostasis and in the regulation of the cation stress signaling cascades. Also involved in bipolar budding. This Saccharomyces cerevisiae (strain ATCC 204508 / S288c) (Baker's yeast) protein is Protein ATC1/LIC4 (ATC1).